Here is a 344-residue protein sequence, read N- to C-terminus: Fructose-1,6-bisphosphatase class 1 (344 aa).

Residues Glu-90, Asp-109, Leu-111, and Asp-112 each coordinate Mg(2+). Substrate-binding positions include 112–115 (DGSS) and Asn-200. Glu-271 lines the Mg(2+) pocket.

Belongs to the FBPase class 1 family. In terms of assembly, homotetramer. Mg(2+) is required as a cofactor.

The protein localises to the cytoplasm. The catalysed reaction is beta-D-fructose 1,6-bisphosphate + H2O = beta-D-fructose 6-phosphate + phosphate. Its pathway is carbohydrate biosynthesis; gluconeogenesis. In Nitrobacter vulgaris, this protein is Fructose-1,6-bisphosphatase class 1.